A 60-amino-acid chain; its full sequence is Large ribosomal subunit protein uL30 (60 aa).

The protein belongs to the universal ribosomal protein uL30 family. In terms of assembly, part of the 50S ribosomal subunit.

This Acidovorax ebreus (strain TPSY) (Diaphorobacter sp. (strain TPSY)) protein is Large ribosomal subunit protein uL30.